The following is a 410-amino-acid chain: Peptidase T (410 aa).

Histidine 77 is a Zn(2+) binding site. Residue aspartate 79 is part of the active site. Zn(2+) is bound at residue aspartate 140. Residue glutamate 174 is the Proton acceptor of the active site. Residues glutamate 175, aspartate 197, and histidine 379 each coordinate Zn(2+).

It belongs to the peptidase M20B family. Zn(2+) is required as a cofactor.

The protein resides in the cytoplasm. It carries out the reaction Release of the N-terminal residue from a tripeptide.. In terms of biological role, cleaves the N-terminal amino acid of tripeptides. This is Peptidase T from Desulfitobacterium hafniense (strain DSM 10664 / DCB-2).